Reading from the N-terminus, the 712-residue chain is Rap1 GTPase-activating protein 2 (712 aa).

Residues 1 to 33 form a disordered region; it reads MLAGLKVKKQELANSSDVTLPDRPLSPPLTAPP. Residue Ser-26 is modified to Phosphoserine. The residue at position 30 (Thr-30) is a Phosphothreonine. The Rap-GAP domain occupies 229–445; sequence IVSYDEHDVN…RTRAALLDNL (217 aa). Ser-488, Ser-495, Ser-525, Ser-539, Ser-545, Ser-593, and Ser-594 each carry phosphoserine. A disordered region spans residues 529 to 712; it reads AAATAKNQSR…LSHASSSAGH (184 aa). Residues 566–594 show a composition bias toward polar residues; the sequence is DSASSTPKTPDGGHSSQEIKSETSSNPSS. Residues 599-612 are compositionally biased toward basic and acidic residues; it reads PNKEKPFIKLKENG. A compositionally biased stretch (low complexity) spans 617–629; sequence SRSSSSTSSFSST. Positions 641–652 are enriched in polar residues; the sequence is SGSSQPSTTSPF. A compositionally biased stretch (low complexity) spans 660–669; sequence SPSPSSESPS. The segment covering 681–694 has biased composition (polar residues); it reads RSPTDAKSRNSPRS.

The protein localises to the cytoplasm. Its function is as follows. GTPase activator for the nuclear Ras-related regulatory protein RAP-1A (KREV-1), converting it to the putatively inactive GDP-bound state. The protein is Rap1 GTPase-activating protein 2 (Rap1gap2) of Mus musculus (Mouse).